Consider the following 419-residue polypeptide: Enolase (419 aa).

A (2R)-2-phosphoglycerate-binding site is contributed by glutamine 160. Glutamate 204 (proton donor) is an active-site residue. The Mg(2+) site is built by aspartate 240, glutamate 283, and aspartate 309. Residues lysine 334, arginine 363, serine 364, and lysine 385 each contribute to the (2R)-2-phosphoglycerate site. Catalysis depends on lysine 334, which acts as the Proton acceptor.

This sequence belongs to the enolase family. The cofactor is Mg(2+).

Its subcellular location is the cytoplasm. It is found in the secreted. It localises to the cell surface. The catalysed reaction is (2R)-2-phosphoglycerate = phosphoenolpyruvate + H2O. It functions in the pathway carbohydrate degradation; glycolysis; pyruvate from D-glyceraldehyde 3-phosphate: step 4/5. Its function is as follows. Catalyzes the reversible conversion of 2-phosphoglycerate (2-PG) into phosphoenolpyruvate (PEP). It is essential for the degradation of carbohydrates via glycolysis. In Pyrobaculum aerophilum (strain ATCC 51768 / DSM 7523 / JCM 9630 / CIP 104966 / NBRC 100827 / IM2), this protein is Enolase.